The sequence spans 274 residues: Mitochondrial S-adenosylmethionine carrier protein (274 aa).

Solcar repeat units follow at residues 4–77, 86–168, and 177–265; these read PGFT…VKSL, FKPV…LKAL, and VDSW…ARSL. Helical transmembrane passes span 5–25, 49–69, 85–105, 142–162, 182–202, and 238–258; these read GFTA…LILF, IYAG…AFFL, HFKP…ACLI, RGYK…FPLW, SAVC…PLDV, and FAGV…FLGA.

This sequence belongs to the mitochondrial carrier (TC 2.A.29) family.

Its subcellular location is the mitochondrion inner membrane. It carries out the reaction S-adenosyl-L-homocysteine(out) + S-adenosyl-L-methionine(in) = S-adenosyl-L-homocysteine(in) + S-adenosyl-L-methionine(out). Functionally, mitochondrial S-adenosyl-L-methionine/S-adenosyl-L-homocysteine antiporter. Mediates the exchange of cytosolic S-adenosyl-L-methionine, the predominant methyl-group donor for macromolecule methylation processes, for mitochondrial S-adenosylhomocysteine(SAH), a by-product of methylation reactions. This chain is Mitochondrial S-adenosylmethionine carrier protein, found in Mus musculus (Mouse).